Reading from the N-terminus, the 386-residue chain is WD repeat-containing protein 89 (386 aa).

WD repeat units follow at residues 21–65 (KEPT…VIRE), 68–106 (GYPG…GKPV), 111–155 (GYPS…QDLS), 167–207 (THSD…EDDA), 213–253 (NSVS…TDEP), and 318–357 (GHAA…KTFT).

The chain is WD repeat-containing protein 89 (WDR89) from Bos taurus (Bovine).